The sequence spans 193 residues: dTTP/UTP pyrophosphatase (193 aa).

Asp-71 serves as the catalytic Proton acceptor.

Belongs to the Maf family. YhdE subfamily. A divalent metal cation serves as cofactor.

The protein resides in the cytoplasm. It catalyses the reaction dTTP + H2O = dTMP + diphosphate + H(+). The enzyme catalyses UTP + H2O = UMP + diphosphate + H(+). Its function is as follows. Nucleoside triphosphate pyrophosphatase that hydrolyzes dTTP and UTP. May have a dual role in cell division arrest and in preventing the incorporation of modified nucleotides into cellular nucleic acids. The sequence is that of dTTP/UTP pyrophosphatase from Citrifermentans bemidjiense (strain ATCC BAA-1014 / DSM 16622 / JCM 12645 / Bem) (Geobacter bemidjiensis).